A 214-amino-acid chain; its full sequence is Ribosomal RNA small subunit methyltransferase G (214 aa).

Residues G56, F61, 107–108 (IE), and R125 each bind S-adenosyl-L-methionine.

The protein belongs to the methyltransferase superfamily. RNA methyltransferase RsmG family.

It is found in the cytoplasm. Functionally, specifically methylates the N7 position of a guanine in 16S rRNA. This is Ribosomal RNA small subunit methyltransferase G from Syntrophomonas wolfei subsp. wolfei (strain DSM 2245B / Goettingen).